A 363-amino-acid polypeptide reads, in one-letter code: Peptide chain release factor 1 (363 aa).

Q236 is modified (N5-methylglutamine). The segment at 286-305 (KKEMERSTMRKSQIGSGDRS) is disordered.

This sequence belongs to the prokaryotic/mitochondrial release factor family. Post-translationally, methylated by PrmC. Methylation increases the termination efficiency of RF1.

It localises to the cytoplasm. Functionally, peptide chain release factor 1 directs the termination of translation in response to the peptide chain termination codons UAG and UAA. This Wolbachia pipientis subsp. Culex pipiens (strain wPip) protein is Peptide chain release factor 1.